Reading from the N-terminus, the 260-residue chain is MKGISRMSIREVSEVLNTEPSEEFLKACAQDERLGIQNLIVRYYKEWEARLVEAERIEALLREEKQLWLNGYLHIAGIDEAGRGPLAGPVVAATCILPAKFNLPGLNDSKKLTESKREKLFQQIKEQAIGYAVGSAEPAEIDGLNILQATKLAMKRAVEGLKVRPHFLLIDALELPSLKIPQKGIIDGDALSASIAAASILAKVSRDHLMGELDKLYPEYGFAKNKGYGTREHLMALRRHGVSPIHRRSFAPVQQQLDIV.

The RNase H type-2 domain maps to Leu-73–Val-260. Positions 79, 80, and 171 each coordinate a divalent metal cation.

Belongs to the RNase HII family. The cofactor is Mn(2+). Requires Mg(2+) as cofactor.

The protein resides in the cytoplasm. The enzyme catalyses Endonucleolytic cleavage to 5'-phosphomonoester.. In terms of biological role, endonuclease that specifically degrades the RNA of RNA-DNA hybrids. This is Ribonuclease HII from Desulfitobacterium hafniense (strain DSM 10664 / DCB-2).